We begin with the raw amino-acid sequence, 212 residues long: Large ribosomal subunit protein uL1 (212 aa).

Belongs to the universal ribosomal protein uL1 family. In terms of assembly, part of the 50S ribosomal subunit.

Binds directly to 23S rRNA. Probably involved in E site tRNA release. In terms of biological role, protein L1 is also a translational repressor protein, it controls the translation of its operon by binding to its mRNA. This Halobacterium salinarum (strain ATCC 29341 / DSM 671 / R1) protein is Large ribosomal subunit protein uL1.